The following is a 390-amino-acid chain: Glucose-fructose oxidoreductase domain-containing protein 1 (390 aa).

The N-terminal stretch at 1-21 (MLPGVGVFGTSLTSRVIIPLL) is a signal peptide. N-linked (GlcNAc...) asparagine glycosylation is found at asparagine 161, asparagine 270, and asparagine 354.

Belongs to the Gfo/Idh/MocA family. In terms of assembly, homodimer.

It is found in the secreted. In terms of biological role, probably catalytically inactive enzyme. Does not bind NAD or NADP. The polypeptide is Glucose-fructose oxidoreductase domain-containing protein 1 (gfod1) (Xenopus tropicalis (Western clawed frog)).